Reading from the N-terminus, the 349-residue chain is Thioredoxin reductase, mitochondrial (349 aa).

Residues Met1–Arg30 constitute a mitochondrion transit peptide. FAD is bound by residues Ser41 to Ala44, Ile70 to Ala71, Gln75, Asn84, Val117, Cys175, Asp318, and Arg325 to Ala327. Cys172 and Cys175 form a disulfide bridge.

This sequence belongs to the class-II pyridine nucleotide-disulfide oxidoreductase family. As to quaternary structure, homodimer. Requires FAD as cofactor.

It localises to the mitochondrion. The catalysed reaction is [thioredoxin]-dithiol + NADP(+) = [thioredoxin]-disulfide + NADPH + H(+). The protein is Thioredoxin reductase, mitochondrial (TRR1) of Kluyveromyces lactis (strain ATCC 8585 / CBS 2359 / DSM 70799 / NBRC 1267 / NRRL Y-1140 / WM37) (Yeast).